The chain runs to 604 residues: FAD-linked oxidoreductase easE (604 aa).

A signal peptide spans 1–25; that stretch reads MQFLLWSTGLVALLSWLIYTQETQS. Asn-47, Asn-70, Asn-106, and Asn-196 each carry an N-linked (GlcNAc...) asparagine glycan. Residues 125–308 form the FAD-binding PCMH-type domain; that stretch reads QGRIPLFTVG…TRATMRVFPD (184 aa).

The protein belongs to the oxygen-dependent FAD-linked oxidoreductase family. Requires FAD as cofactor.

It participates in alkaloid biosynthesis; ergot alkaloid biosynthesis. FAD-linked oxidoreductase; part of the gene cluster that mediates the biosynthesis of fungal ergot alkaloid. DmaW catalyzes the first step of ergot alkaloid biosynthesis by condensing dimethylallyl diphosphate (DMAP) and tryptophan to form 4-dimethylallyl-L-tryptophan. The second step is catalyzed by the methyltransferase easF that methylates 4-dimethylallyl-L-tryptophan in the presence of S-adenosyl-L-methionine, resulting in the formation of 4-dimethylallyl-L-abrine. The catalase easC and the FAD-dependent oxidoreductase easE then transform 4-dimethylallyl-L-abrine to chanoclavine-I which is further oxidized by easD in the presence of NAD(+), resulting in the formation of chanoclavine-I aldehyde. Chanoclavine-I aldehyde is the precursor of ergoamides and ergopeptines in Clavicipitaceae, and clavine-type alcaloids such as fumiclavine in Trichocomaceae. However, the metabolites downstream of chanoclavine-I aldehyde in Arthrodermataceae have not been identified yet. This Trichophyton verrucosum (strain HKI 0517) protein is FAD-linked oxidoreductase easE.